The primary structure comprises 563 residues: Arginine--tRNA ligase (563 aa).

The short motif at 121-131 (PNIAKPFSIGH) is the 'HIGH' region element.

This sequence belongs to the class-I aminoacyl-tRNA synthetase family. As to quaternary structure, monomer.

It localises to the cytoplasm. It catalyses the reaction tRNA(Arg) + L-arginine + ATP = L-arginyl-tRNA(Arg) + AMP + diphosphate. The polypeptide is Arginine--tRNA ligase (Streptococcus pyogenes serotype M6 (strain ATCC BAA-946 / MGAS10394)).